Reading from the N-terminus, the 760-residue chain is Xaa-Pro dipeptidyl-peptidase (760 aa).

Residues Ser349, Asp469, and His499 each act as charge relay system in the active site.

This sequence belongs to the peptidase S15 family. In terms of assembly, homodimer.

It is found in the cytoplasm. It catalyses the reaction Hydrolyzes Xaa-Pro-|- bonds to release unblocked, N-terminal dipeptides from substrates including Ala-Pro-|-p-nitroanilide and (sequentially) Tyr-Pro-|-Phe-Pro-|-Gly-Pro-|-Ile.. Its function is as follows. Removes N-terminal dipeptides sequentially from polypeptides having unsubstituted N-termini provided that the penultimate residue is proline. This Streptococcus pyogenes serotype M6 (strain ATCC BAA-946 / MGAS10394) protein is Xaa-Pro dipeptidyl-peptidase.